Consider the following 202-residue polypeptide: Small ribosomal subunit protein uS5 (202 aa).

Positions 46–109 (LKSEVLSVGF…RRAKLNIVPV (64 aa)) constitute an S5 DRBM domain.

Belongs to the universal ribosomal protein uS5 family. In terms of assembly, part of the 30S ribosomal subunit. Contacts protein S4.

Its function is as follows. With S4 and S12 plays an important role in translational accuracy. The chain is Small ribosomal subunit protein uS5 from Thermofilum pendens (strain DSM 2475 / Hrk 5).